Reading from the N-terminus, the 100-residue chain is Large ribosomal subunit protein bL21 (100 aa).

This sequence belongs to the bacterial ribosomal protein bL21 family. Part of the 50S ribosomal subunit. Contacts protein L20.

This protein binds to 23S rRNA in the presence of protein L20. This chain is Large ribosomal subunit protein bL21, found in Mycoplasmopsis synoviae (strain 53) (Mycoplasma synoviae).